The chain runs to 61 residues: Small ribosomal subunit protein uS14B (61 aa).

Zn(2+)-binding residues include Cys24, Cys27, Cys40, and Cys43.

This sequence belongs to the universal ribosomal protein uS14 family. Zinc-binding uS14 subfamily. Part of the 30S ribosomal subunit. Contacts proteins S3 and S10. Zn(2+) is required as a cofactor.

Binds 16S rRNA, required for the assembly of 30S particles and may also be responsible for determining the conformation of the 16S rRNA at the A site. This is Small ribosomal subunit protein uS14B from Mycobacterium ulcerans (strain Agy99).